The chain runs to 868 residues: Probable mixed-linked glucan synthase 3 (868 aa).

The disordered stretch occupies residues 36–68 (ERKAAGGGGGGAKGKHWAAADKGERRAAKECGG). A compositionally biased stretch (basic and acidic residues) spans 53–68 (AAADKGERRAAKECGG). 2 consecutive transmembrane segments (helical) span residues 86–106 (LLHP…LFFG) and 116–136 (IMWF…SWLL). D211 is an active-site residue. Positions 412 and 414 each coordinate substrate. D573 is a catalytic residue. Helical transmembrane passes span 649-669 (IYPV…MWLI), 686-706 (LLVI…WAGI), 717-737 (FFMI…VVNL), 771-791 (MLIP…VAIG), 810-830 (MGLL…LAIM), and 838-858 (IILV…YVAT).

Belongs to the glycosyltransferase 2 family. Plant cellulose synthase-like F subfamily.

The protein localises to the golgi apparatus membrane. May catalyze both beta-1,3 and beta-1,4 glycosidic linkage on beta-D-glucan. Essential for (1,3;1,4)-beta-D-glucans synthesis in grasses and cereals (Poaceae). The mixed-linked glucans (which are not present in walls of dicotyledons or most other monocotyledonous plants) are particularly important constituents of the walls of the starchy endosperm and aleurone cells of cereal grains such as oats, wheat, rice and barley. They can account for up to 70% by weight of the wall. The chain is Probable mixed-linked glucan synthase 3 (CSLF3) from Oryza sativa subsp. japonica (Rice).